The sequence spans 154 residues: SsrA-binding protein (154 aa).

Positions Lys135 to Arg154 are disordered.

It belongs to the SmpB family.

The protein resides in the cytoplasm. Its function is as follows. Required for rescue of stalled ribosomes mediated by trans-translation. Binds to transfer-messenger RNA (tmRNA), required for stable association of tmRNA with ribosomes. tmRNA and SmpB together mimic tRNA shape, replacing the anticodon stem-loop with SmpB. tmRNA is encoded by the ssrA gene; the 2 termini fold to resemble tRNA(Ala) and it encodes a 'tag peptide', a short internal open reading frame. During trans-translation Ala-aminoacylated tmRNA acts like a tRNA, entering the A-site of stalled ribosomes, displacing the stalled mRNA. The ribosome then switches to translate the ORF on the tmRNA; the nascent peptide is terminated with the 'tag peptide' encoded by the tmRNA and targeted for degradation. The ribosome is freed to recommence translation, which seems to be the essential function of trans-translation. This Microcystis aeruginosa (strain NIES-843 / IAM M-2473) protein is SsrA-binding protein.